Reading from the N-terminus, the 620-residue chain is Glutathione-regulated potassium-efflux system protein KefC (620 aa).

12 helical membrane passes run 4 to 24 (HTLL…PIAV), 26 to 46 (LGLG…PWGL), 54 to 74 (SILH…GLEL), 90 to 110 (GALQ…FLGL), 114 to 134 (VAEL…MQAM), 149 to 169 (FAVL…IPLL), 178 to 198 (LGAF…VVLL), 218 to 238 (VFSA…EEVG), 270 to 290 (GLLL…GTLV), 294 to 314 (LRIL…LWLV), 327 to 347 (WFAV…GAAQ), and 359 to 379 (ALTL…VLLT). One can recognise an RCK N-terminal domain in the interval 399–518 (QPRVIVAGFG…AGVAMPERET (120 aa)). Positions 599–620 (QGTAEGKHSGEAADEPEVKPSI) are disordered.

The protein belongs to the monovalent cation:proton antiporter 2 (CPA2) transporter (TC 2.A.37) family. KefC subfamily. Homodimer. Interacts with the regulatory subunit KefF.

Its subcellular location is the cell inner membrane. Its function is as follows. Pore-forming subunit of a potassium efflux system that confers protection against electrophiles. Catalyzes K(+)/H(+) antiport. This chain is Glutathione-regulated potassium-efflux system protein KefC, found in Salmonella dublin (strain CT_02021853).